We begin with the raw amino-acid sequence, 40 residues long: Photosystem II reaction center protein J (40 aa).

Residues 8–28 form a helical membrane-spanning segment; that stretch reads IPLWIIGTVTGILVIGLVGIF.

Belongs to the PsbJ family. In terms of assembly, PSII is composed of 1 copy each of membrane proteins PsbA, PsbB, PsbC, PsbD, PsbE, PsbF, PsbH, PsbI, PsbJ, PsbK, PsbL, PsbM, PsbT, PsbX, PsbY, PsbZ, Psb30/Ycf12, at least 3 peripheral proteins of the oxygen-evolving complex and a large number of cofactors. It forms dimeric complexes.

The protein resides in the plastid. It is found in the chloroplast thylakoid membrane. One of the components of the core complex of photosystem II (PSII). PSII is a light-driven water:plastoquinone oxidoreductase that uses light energy to abstract electrons from H(2)O, generating O(2) and a proton gradient subsequently used for ATP formation. It consists of a core antenna complex that captures photons, and an electron transfer chain that converts photonic excitation into a charge separation. In Jasminum nudiflorum (Winter jasmine), this protein is Photosystem II reaction center protein J.